The following is a 474-amino-acid chain: UDP-N-acetylmuramate--L-alanine ligase (474 aa).

112–118 (GTHGKTT) is a binding site for ATP.

Belongs to the MurCDEF family.

Its subcellular location is the cytoplasm. It catalyses the reaction UDP-N-acetyl-alpha-D-muramate + L-alanine + ATP = UDP-N-acetyl-alpha-D-muramoyl-L-alanine + ADP + phosphate + H(+). It functions in the pathway cell wall biogenesis; peptidoglycan biosynthesis. In terms of biological role, cell wall formation. This is UDP-N-acetylmuramate--L-alanine ligase from Cupriavidus taiwanensis (strain DSM 17343 / BCRC 17206 / CCUG 44338 / CIP 107171 / LMG 19424 / R1) (Ralstonia taiwanensis (strain LMG 19424)).